The chain runs to 130 residues: MSMQDPLADMLTRIRNAQMAEKSVVSMPSSTLKVAVAKVLKDEGYIAGYQISSETKPLLSIELKYFEGRPVIEEVKRVSRPGLRQYKSVEELPKVRGGLGVSIVSTNKGVMTDRAARAAGVGGEVLCTVF.

It belongs to the universal ribosomal protein uS8 family. As to quaternary structure, part of the 30S ribosomal subunit. Contacts proteins S5 and S12.

One of the primary rRNA binding proteins, it binds directly to 16S rRNA central domain where it helps coordinate assembly of the platform of the 30S subunit. This Pseudomonas fluorescens (strain Pf0-1) protein is Small ribosomal subunit protein uS8.